We begin with the raw amino-acid sequence, 343 residues long: C-X-C chemokine receptor type 6 (343 aa).

Residues 1 to 33 (MAEYDHYEDDGFLNSFNDSSQEEHQDFLQFRKV) lie on the Extracellular side of the membrane. The N-linked (GlcNAc...) asparagine glycan is linked to Asn-17. The chain crosses the membrane as a helical span at residues 34–60 (FLPCMYLVVFVCGLVGNSLVLVISIFY). The Cytoplasmic segment spans residues 61–69 (HKLQSLTDV). The helical transmembrane segment at 70 to 90 (FLVNLPLADLVFVCTLPFWAY) threads the bilayer. At 91–104 (AGIHEWIFGQVMCK) the chain is on the extracellular side. Cys-103 and Cys-181 form a disulfide bridge. The chain crosses the membrane as a helical span at residues 105-126 (TLLGVYTINFYTSMLILTCITV). Residues 127 to 144 (DRFIVVVKATKAYNQQAK) are Cytoplasmic-facing. Residues 145–165 (RMTWGKVICLLIWVISLLVSL) traverse the membrane as a helical segment. The Extracellular portion of the chain corresponds to 166–188 (PQIIYGNVFNLDKLICGYHDEEI). A helical membrane pass occupies residues 189–216 (STVVLATQMTLGFFLPLLAMIVCYSVII). The Cytoplasmic segment spans residues 217–232 (KTLLHAGGFQKHRSLK). A helical transmembrane segment spans residues 233 to 260 (IIFLVMAVFLLTQTPFNLVKLIRSTHWE). Over 261-276 (YYAMTSFHYTIIVTEA) the chain is Extracellular. The chain crosses the membrane as a helical span at residues 277 to 294 (IAYLRACLNPVLYAFVSL). The Cytoplasmic segment spans residues 295–343 (KFRKNFWKLVKDIGCLPYLGVSHQWKSSEDNSKTFSASHNVEATSMFQL).

Belongs to the G-protein coupled receptor 1 family.

It is found in the cell membrane. Functionally, receptor for the C-X-C chemokine CXCL16. Used as a coreceptor by SIVs and by strains of HIV-2 and m-tropic HIV-1. This is C-X-C chemokine receptor type 6 (CXCR6) from Macaca mulatta (Rhesus macaque).